Reading from the N-terminus, the 290-residue chain is Putative tyrosine recombinase TTE1313 (290 aa).

One can recognise a Core-binding (CB) domain in the interval 1 to 85 (MAESVVGEFL…SIKAFYHYLF (85 aa)). One can recognise a Tyr recombinase domain in the interval 106–290 (KEPVTLTVEQ…EVYNKFHPRA (185 aa)). Arg239 is an active-site residue. Tyr283 (O-(3'-phospho-DNA)-tyrosine intermediate) is an active-site residue.

It belongs to the 'phage' integrase family.

The protein resides in the cytoplasm. Site-specific tyrosine recombinase, which acts by catalyzing the cutting and rejoining of the recombining DNA molecules. In Caldanaerobacter subterraneus subsp. tengcongensis (strain DSM 15242 / JCM 11007 / NBRC 100824 / MB4) (Thermoanaerobacter tengcongensis), this protein is Putative tyrosine recombinase TTE1313.